Reading from the N-terminus, the 473-residue chain is Glutamate--tRNA ligase 1 (473 aa).

The 'HIGH' region motif lies at 23–33 (PSPTGLLHVGG). A 'KMSKS' region motif is present at residues 252 to 256 (KLSKR). Lys-255 contacts ATP.

This sequence belongs to the class-I aminoacyl-tRNA synthetase family. Glutamate--tRNA ligase type 1 subfamily. In terms of assembly, monomer.

It localises to the cytoplasm. The catalysed reaction is tRNA(Glu) + L-glutamate + ATP = L-glutamyl-tRNA(Glu) + AMP + diphosphate. Its function is as follows. Catalyzes the attachment of glutamate to tRNA(Glu) in a two-step reaction: glutamate is first activated by ATP to form Glu-AMP and then transferred to the acceptor end of tRNA(Glu). The sequence is that of Glutamate--tRNA ligase 1 from Granulibacter bethesdensis (strain ATCC BAA-1260 / CGDNIH1).